The chain runs to 61 residues: MPRKGIIERWKRPKKFKVREYTRCSVCGRPKAVYREFGLCRVCFRKMALEGKLPGVKKASW.

4 residues coordinate Zn(2+): Cys24, Cys27, Cys40, and Cys43.

This sequence belongs to the universal ribosomal protein uS14 family. Zinc-binding uS14 subfamily. In terms of assembly, part of the 30S ribosomal subunit. Contacts proteins S3 and S10. Zn(2+) serves as cofactor.

Binds 16S rRNA, required for the assembly of 30S particles and may also be responsible for determining the conformation of the 16S rRNA at the A site. This Pseudothermotoga lettingae (strain ATCC BAA-301 / DSM 14385 / NBRC 107922 / TMO) (Thermotoga lettingae) protein is Small ribosomal subunit protein uS14.